Consider the following 371-residue polypeptide: Alanine racemase (371 aa).

Lys35 (proton acceptor; specific for D-alanine) is an active-site residue. Lys35 carries the N6-(pyridoxal phosphate)lysine modification. Arg130 contacts substrate. The Proton acceptor; specific for L-alanine role is filled by Tyr256. Met304 lines the substrate pocket.

This sequence belongs to the alanine racemase family. Pyridoxal 5'-phosphate is required as a cofactor.

It catalyses the reaction L-alanine = D-alanine. It functions in the pathway amino-acid biosynthesis; D-alanine biosynthesis; D-alanine from L-alanine: step 1/1. In terms of biological role, catalyzes the interconversion of L-alanine and D-alanine. May also act on other amino acids. The chain is Alanine racemase (alr) from Verminephrobacter eiseniae (strain EF01-2).